Here is a 285-residue protein sequence, read N- to C-terminus: Extracellular metalloprotease NCU07200 (285 aa).

An N-terminal signal peptide occupies residues 1 to 18 (MQIKSFLLAAAAAPAALG). His-197 contributes to the Zn(2+) binding site. Glu-198 is a catalytic residue. Zn(2+) is bound at residue His-201. Cysteines 233 and 260 form a disulfide. The N-linked (GlcNAc...) asparagine glycan is linked to Asn-282.

It belongs to the peptidase M43B family.

It is found in the secreted. Its function is as follows. Secreted metalloproteinase that allows assimilation of proteinaceous substrates. The polypeptide is Extracellular metalloprotease NCU07200 (Neurospora crassa (strain ATCC 24698 / 74-OR23-1A / CBS 708.71 / DSM 1257 / FGSC 987)).